A 66-amino-acid polypeptide reads, in one-letter code: Large ribosomal subunit protein uL29 (66 aa).

It belongs to the universal ribosomal protein uL29 family.

In Rhizobium meliloti (strain 1021) (Ensifer meliloti), this protein is Large ribosomal subunit protein uL29.